The primary structure comprises 229 residues: 7-cyano-7-deazaguanine synthase (229 aa).

9 to 19 contacts ATP; that stretch reads LSGGLDSTTVL. Positions 192, 202, 205, and 208 each coordinate Zn(2+).

Belongs to the QueC family. Zn(2+) is required as a cofactor.

The enzyme catalyses 7-carboxy-7-deazaguanine + NH4(+) + ATP = 7-cyano-7-deazaguanine + ADP + phosphate + H2O + H(+). Its pathway is purine metabolism; 7-cyano-7-deazaguanine biosynthesis. In terms of biological role, catalyzes the ATP-dependent conversion of 7-carboxy-7-deazaguanine (CDG) to 7-cyano-7-deazaguanine (preQ(0)). The polypeptide is 7-cyano-7-deazaguanine synthase (Kineococcus radiotolerans (strain ATCC BAA-149 / DSM 14245 / SRS30216)).